A 400-amino-acid polypeptide reads, in one-letter code: Enoyl-[acyl-carrier-protein] reductase [NADH] (400 aa).

NAD(+) is bound by residues 48–53, 74–75, 111–112, and 139–140; these read GSSSGY, FE, DA, and LA. A substrate-binding site is contributed by tyrosine 225. Catalysis depends on tyrosine 235, which acts as the Proton donor. NAD(+) contacts are provided by residues lysine 244 and 273 to 275; that span reads VVT.

The protein belongs to the TER reductase family. In terms of assembly, monomer.

The catalysed reaction is a 2,3-saturated acyl-[ACP] + NAD(+) = a (2E)-enoyl-[ACP] + NADH + H(+). Its pathway is lipid metabolism; fatty acid biosynthesis. Its function is as follows. Involved in the final reduction of the elongation cycle of fatty acid synthesis (FAS II). Catalyzes the reduction of a carbon-carbon double bond in an enoyl moiety that is covalently linked to an acyl carrier protein (ACP). This Shewanella pealeana (strain ATCC 700345 / ANG-SQ1) protein is Enoyl-[acyl-carrier-protein] reductase [NADH].